The following is a 118-amino-acid chain: Putative pterin-4-alpha-carbinolamine dehydratase (118 aa).

Belongs to the pterin-4-alpha-carbinolamine dehydratase family.

It catalyses the reaction (4aS,6R)-4a-hydroxy-L-erythro-5,6,7,8-tetrahydrobiopterin = (6R)-L-erythro-6,7-dihydrobiopterin + H2O. The protein is Putative pterin-4-alpha-carbinolamine dehydratase of Stutzerimonas stutzeri (strain A1501) (Pseudomonas stutzeri).